We begin with the raw amino-acid sequence, 184 residues long: Lactoylglutathione lyase (184 aa).

A2 carries the N-acetylalanine modification. A disulfide bond links C19 and C20. The VOC domain occupies L31 to P177. Residues Q34 and R38 each contribute to the substrate site. Residue Q34 coordinates Zn(2+). A disulfide bridge connects residues C61 and C139. Position 88 is an N6-succinyllysine (K88). E100 provides a ligand contact to Zn(2+). N104 provides a ligand contact to substrate. T107 carries the phosphothreonine modification. Substrate contacts are provided by R123 and H127. Zn(2+) is bound at residue H127. At C139 the chain carries S-glutathionyl cysteine; alternate. Position 148 is an N6-acetyllysine; alternate (K148). An N6-succinyllysine; alternate modification is found at K148. K157–M158 provides a ligand contact to substrate. Residue E173 participates in Zn(2+) binding. E173 (proton donor/acceptor) is an active-site residue.

This sequence belongs to the glyoxalase I family. Homodimer. It depends on Zn(2+) as a cofactor. Glutathionylation at Cys-139 inhibits enzyme activity. In terms of processing, phosphorylated at Thr-107 in the presence of CaMK2. However, this is a consensus site for phosphorylation by CK2 so phosphorylation may be mediated by CK2 rather than CaMK2. Phosphorylation is induced by TNF and suppresses the TNF-induced transcriptional activity of NF-kappa-B. Post-translationally, exists in a nitric oxide (NO)-modified form. The exact nature of the modification is unknown, but it suppresses the TNF-induced transcriptional activity of NF-kappa-B.

The catalysed reaction is (R)-S-lactoylglutathione = methylglyoxal + glutathione. The protein operates within secondary metabolite metabolism; methylglyoxal degradation; (R)-lactate from methylglyoxal: step 1/2. Its activity is regulated as follows. Regulated by oxidation of Cys-139 in response to the redox state of the cell. Results in the alternative formation of cystine or glutathione-bound cysteine, the latter modification leading to reduced enzyme activity. Its function is as follows. Catalyzes the conversion of hemimercaptal, formed from methylglyoxal and glutathione, to S-lactoylglutathione. Involved in the regulation of TNF-induced transcriptional activity of NF-kappa-B. Required for normal osteoclastogenesis. In Homo sapiens (Human), this protein is Lactoylglutathione lyase (GLO1).